The sequence spans 362 residues: Probable dual-specificity RNA methyltransferase RlmN (362 aa).

Glu-105 serves as the catalytic Proton acceptor. Residues 111 to 344 enclose the Radical SAM core domain; sequence HEYGNSICVT…VTIRREQGHD (234 aa). Cys-118 and Cys-349 are joined by a disulfide. Residues Cys-125, Cys-129, and Cys-132 each coordinate [4Fe-4S] cluster. S-adenosyl-L-methionine-binding positions include 175–176, Ser-207, 230–232, and Asn-306; these read GE and SLH. Residue Cys-349 is the S-methylcysteine intermediate of the active site.

Belongs to the radical SAM superfamily. RlmN family. [4Fe-4S] cluster serves as cofactor.

The protein resides in the cytoplasm. The catalysed reaction is adenosine(2503) in 23S rRNA + 2 reduced [2Fe-2S]-[ferredoxin] + 2 S-adenosyl-L-methionine = 2-methyladenosine(2503) in 23S rRNA + 5'-deoxyadenosine + L-methionine + 2 oxidized [2Fe-2S]-[ferredoxin] + S-adenosyl-L-homocysteine. It catalyses the reaction adenosine(37) in tRNA + 2 reduced [2Fe-2S]-[ferredoxin] + 2 S-adenosyl-L-methionine = 2-methyladenosine(37) in tRNA + 5'-deoxyadenosine + L-methionine + 2 oxidized [2Fe-2S]-[ferredoxin] + S-adenosyl-L-homocysteine. Specifically methylates position 2 of adenine 2503 in 23S rRNA and position 2 of adenine 37 in tRNAs. This chain is Probable dual-specificity RNA methyltransferase RlmN, found in Bacillus cereus (strain ATCC 14579 / DSM 31 / CCUG 7414 / JCM 2152 / NBRC 15305 / NCIMB 9373 / NCTC 2599 / NRRL B-3711).